The primary structure comprises 613 residues: Probable potassium transport system protein Kup 1 (613 aa).

The next 12 membrane-spanning stretches (helical) occupy residues 40-60, 93-113, 127-147, 158-178, 201-221, 237-257, 266-286, 288-308, 327-347, 356-376, 384-404, and 409-429; these read VLSMLFWSMTLVVSIKYVVFV, MLLGLLGASMFYGDAVITPAI, PALQPWVLPLSLIVLVGLFLL, LFGPVMLFWFVLLGLIGLFSV, AVQAFIVFGSVFLALTGAEAL, WFYIAMPCLLLNYFGQGALLL, PFFLLMPTWAVAPTIVLATAA, VIASQAVISGAFSMTAQAVHL, IYVPVVNYALLLLVVAVVLAF, AYGIAVTTTMLLTTGLVTVVM, LPAVALLGTVFLAVDLSFFGA, and VAAGGWFPLLLGGLIFFLMVT.

This sequence belongs to the HAK/KUP transporter (TC 2.A.72) family.

The protein localises to the cell inner membrane. It carries out the reaction K(+)(in) + H(+)(in) = K(+)(out) + H(+)(out). Functionally, transport of potassium into the cell. Likely operates as a K(+):H(+) symporter. This is Probable potassium transport system protein Kup 1 from Ralstonia nicotianae (strain ATCC BAA-1114 / GMI1000) (Ralstonia solanacearum).